A 56-amino-acid polypeptide reads, in one-letter code: Large ribosomal subunit protein bL32 (56 aa).

The segment at 1–23 (MAVQQNKSTRSKRGMRRSHNALP) is disordered. Positions 9–19 (TRSKRGMRRSH) are enriched in basic residues.

Belongs to the bacterial ribosomal protein bL32 family.

This Blochmanniella floridana protein is Large ribosomal subunit protein bL32.